Here is a 491-residue protein sequence, read N- to C-terminus: Argininosuccinate lyase (491 aa).

This sequence belongs to the lyase 1 family. Argininosuccinate lyase subfamily.

Its subcellular location is the cytoplasm. It carries out the reaction 2-(N(omega)-L-arginino)succinate = fumarate + L-arginine. It functions in the pathway amino-acid biosynthesis; L-arginine biosynthesis; L-arginine from L-ornithine and carbamoyl phosphate: step 3/3. In Methanosarcina acetivorans (strain ATCC 35395 / DSM 2834 / JCM 12185 / C2A), this protein is Argininosuccinate lyase.